Here is a 379-residue protein sequence, read N- to C-terminus: Cytochrome b (379 aa).

Helical transmembrane passes span phenylalanine 33 to methionine 53, tryptophan 77 to isoleucine 98, tryptophan 113 to leucine 133, and phenylalanine 178 to leucine 198. Histidine 83 and histidine 97 together coordinate heme b. Heme b-binding residues include histidine 182 and histidine 196. Histidine 201 provides a ligand contact to a ubiquinone. Transmembrane regions (helical) follow at residues threonine 226 to phenylalanine 246, methionine 288 to glutamine 308, isoleucine 320 to glycine 340, and phenylalanine 347 to proline 367.

It belongs to the cytochrome b family. As to quaternary structure, the cytochrome bc1 complex contains 11 subunits: 3 respiratory subunits (MT-CYB, CYC1 and UQCRFS1), 2 core proteins (UQCRC1 and UQCRC2) and 6 low-molecular weight proteins (UQCRH/QCR6, UQCRB/QCR7, UQCRQ/QCR8, UQCR10/QCR9, UQCR11/QCR10 and a cleavage product of UQCRFS1). This cytochrome bc1 complex then forms a dimer. It depends on heme b as a cofactor.

The protein resides in the mitochondrion inner membrane. In terms of biological role, component of the ubiquinol-cytochrome c reductase complex (complex III or cytochrome b-c1 complex) that is part of the mitochondrial respiratory chain. The b-c1 complex mediates electron transfer from ubiquinol to cytochrome c. Contributes to the generation of a proton gradient across the mitochondrial membrane that is then used for ATP synthesis. This Dipodomys ordii (Ord's kangaroo rat) protein is Cytochrome b (MT-CYB).